The following is a 306-amino-acid chain: Transcription initiation factor IIB 2 (306 aa).

The TFIIB-type zinc-finger motif lies at 6–37 (PKRVCPICGSTEFIYDPRRGEIVCAKCGYVIE). Cys10, Cys13, Cys29, and Cys32 together coordinate Zn(2+). A run of 2 repeats spans residues 123-206 (SELD…ARGL) and 217-298 (EYVD…ELVE).

This sequence belongs to the TFIIB family.

Its function is as follows. Stabilizes TBP binding to an archaeal box-A promoter. Also responsible for recruiting RNA polymerase II to the pre-initiation complex (DNA-TBP-TFIIB). The protein is Transcription initiation factor IIB 2 of Thermococcus kodakarensis (strain ATCC BAA-918 / JCM 12380 / KOD1) (Pyrococcus kodakaraensis (strain KOD1)).